Reading from the N-terminus, the 295-residue chain is 4-hydroxy-tetrahydrodipicolinate synthase (295 aa).

Thr46 contributes to the pyruvate binding site. Residue Tyr134 is the Proton donor/acceptor of the active site. The active-site Schiff-base intermediate with substrate is Lys162. Val204 lines the pyruvate pocket.

The protein belongs to the DapA family. As to quaternary structure, homotetramer; dimer of dimers.

It is found in the cytoplasm. The catalysed reaction is L-aspartate 4-semialdehyde + pyruvate = (2S,4S)-4-hydroxy-2,3,4,5-tetrahydrodipicolinate + H2O + H(+). It functions in the pathway amino-acid biosynthesis; L-lysine biosynthesis via DAP pathway; (S)-tetrahydrodipicolinate from L-aspartate: step 3/4. In terms of biological role, catalyzes the condensation of (S)-aspartate-beta-semialdehyde [(S)-ASA] and pyruvate to 4-hydroxy-tetrahydrodipicolinate (HTPA). This chain is 4-hydroxy-tetrahydrodipicolinate synthase, found in Oceanobacillus iheyensis (strain DSM 14371 / CIP 107618 / JCM 11309 / KCTC 3954 / HTE831).